The chain runs to 620 residues: Chaperone protein DnaK (620 aa).

Thr197 carries the phosphothreonine; by autocatalysis modification. The interval 591–620 (AQKLGEAMANKNNAEQPKKKDDDVIDAEVE) is disordered.

Belongs to the heat shock protein 70 family.

Its function is as follows. Acts as a chaperone. This chain is Chaperone protein DnaK, found in Helicobacter pylori (strain HPAG1).